A 343-amino-acid chain; its full sequence is Holliday junction branch migration complex subunit RuvB (343 aa).

The segment at 1–186 (MVMARKSDTL…FQIQERLEYY (186 aa)) is large ATPase domain (RuvB-L). Residues Leu-25, Arg-26, Gly-67, Lys-70, Thr-71, Ser-72, 133–135 (EDF), Arg-176, Tyr-186, and Arg-223 contribute to the ATP site. Thr-71 lines the Mg(2+) pocket. The tract at residues 187-257 (DAKALESILH…LAQKSLDRLG (71 aa)) is small ATPAse domain (RuvB-S). The tract at residues 260-343 (ASGLDSMDRK…PPPTPQGSLF (84 aa)) is head domain (RuvB-H). DNA contacts are provided by Arg-296, Arg-315, and Arg-320.

It belongs to the RuvB family. In terms of assembly, homohexamer. Forms an RuvA(8)-RuvB(12)-Holliday junction (HJ) complex. HJ DNA is sandwiched between 2 RuvA tetramers; dsDNA enters through RuvA and exits via RuvB. An RuvB hexamer assembles on each DNA strand where it exits the tetramer. Each RuvB hexamer is contacted by two RuvA subunits (via domain III) on 2 adjacent RuvB subunits; this complex drives branch migration. In the full resolvosome a probable DNA-RuvA(4)-RuvB(12)-RuvC(2) complex forms which resolves the HJ.

Its subcellular location is the cytoplasm. It catalyses the reaction ATP + H2O = ADP + phosphate + H(+). The RuvA-RuvB-RuvC complex processes Holliday junction (HJ) DNA during genetic recombination and DNA repair, while the RuvA-RuvB complex plays an important role in the rescue of blocked DNA replication forks via replication fork reversal (RFR). RuvA specifically binds to HJ cruciform DNA, conferring on it an open structure. The RuvB hexamer acts as an ATP-dependent pump, pulling dsDNA into and through the RuvAB complex. RuvB forms 2 homohexamers on either side of HJ DNA bound by 1 or 2 RuvA tetramers; 4 subunits per hexamer contact DNA at a time. Coordinated motions by a converter formed by DNA-disengaged RuvB subunits stimulates ATP hydrolysis and nucleotide exchange. Immobilization of the converter enables RuvB to convert the ATP-contained energy into a lever motion, pulling 2 nucleotides of DNA out of the RuvA tetramer per ATP hydrolyzed, thus driving DNA branch migration. The RuvB motors rotate together with the DNA substrate, which together with the progressing nucleotide cycle form the mechanistic basis for DNA recombination by continuous HJ branch migration. Branch migration allows RuvC to scan DNA until it finds its consensus sequence, where it cleaves and resolves cruciform DNA. The polypeptide is Holliday junction branch migration complex subunit RuvB (Myxococcus xanthus (strain DK1622)).